The sequence spans 512 residues: Probable DNA ligase (512 aa).

Position 208 (glutamate 208) interacts with ATP. The active-site N6-AMP-lysine intermediate is lysine 210. ATP contacts are provided by arginine 215, arginine 230, glutamate 259, phenylalanine 299, arginine 374, and lysine 380.

The protein belongs to the ATP-dependent DNA ligase family. Mg(2+) serves as cofactor.

The catalysed reaction is ATP + (deoxyribonucleotide)n-3'-hydroxyl + 5'-phospho-(deoxyribonucleotide)m = (deoxyribonucleotide)n+m + AMP + diphosphate.. Functionally, DNA ligase that seals nicks in double-stranded DNA during DNA replication, DNA recombination and DNA repair. The chain is Probable DNA ligase from Streptomyces coelicolor (strain ATCC BAA-471 / A3(2) / M145).